The primary structure comprises 768 residues: Solabiose phosphorylase (768 aa).

Aspartate 456 (proton donor) is an active-site residue.

It belongs to the glycosyl hydrolase 94 family.

It carries out the reaction solabiose + phosphate = D-galactose + alpha-D-glucose 1-phosphate. Its function is as follows. Catalyzes the reversible phosphorolysis of solabiose. Catalyzes the phosphorolysis and synthesis of solabiose through a sequential bi-bi mechanism involving the formation of a ternary complex. Is probably involved in the metabolism of solabiose released from solabiose-containing compounds. This chain is Solabiose phosphorylase, found in Paenibacillus borealis.